The chain runs to 165 residues: Thiol peroxidase (165 aa).

The region spanning 18-164 (RKVGDKAPNF…YEAAIEAAKK (147 aa)) is the Thioredoxin domain. C60 acts as the Cysteine sulfenic acid (-SOH) intermediate in catalysis. C60 and C94 are oxidised to a cystine.

The protein belongs to the peroxiredoxin family. Tpx subfamily. In terms of assembly, homodimer.

It carries out the reaction a hydroperoxide + [thioredoxin]-dithiol = an alcohol + [thioredoxin]-disulfide + H2O. Its function is as follows. Thiol-specific peroxidase that catalyzes the reduction of hydrogen peroxide and organic hydroperoxides to water and alcohols, respectively. Plays a role in cell protection against oxidative stress by detoxifying peroxides. The polypeptide is Thiol peroxidase (Listeria monocytogenes serotype 4b (strain F2365)).